The primary structure comprises 341 residues: Phenylalanine--tRNA ligase alpha subunit (341 aa).

Glutamate 254 contributes to the Mg(2+) binding site.

The protein belongs to the class-II aminoacyl-tRNA synthetase family. Phe-tRNA synthetase alpha subunit type 1 subfamily. As to quaternary structure, tetramer of two alpha and two beta subunits. It depends on Mg(2+) as a cofactor.

It localises to the cytoplasm. It catalyses the reaction tRNA(Phe) + L-phenylalanine + ATP = L-phenylalanyl-tRNA(Phe) + AMP + diphosphate + H(+). This chain is Phenylalanine--tRNA ligase alpha subunit, found in Chlorobium limicola (strain DSM 245 / NBRC 103803 / 6330).